Reading from the N-terminus, the 264-residue chain is Thymidylate synthase (264 aa).

Arginine 21 contributes to the dUMP binding site. Residue histidine 51 participates in (6R)-5,10-methylene-5,6,7,8-tetrahydrofolate binding. 126–127 (RR) lines the dUMP pocket. The active-site Nucleophile is cysteine 146. DUMP is bound by residues 166-169 (RSAD), asparagine 177, and 207-209 (HLY). Position 169 (aspartate 169) interacts with (6R)-5,10-methylene-5,6,7,8-tetrahydrofolate. Alanine 263 serves as a coordination point for (6R)-5,10-methylene-5,6,7,8-tetrahydrofolate.

The protein belongs to the thymidylate synthase family. Bacterial-type ThyA subfamily. Homodimer.

It localises to the cytoplasm. It carries out the reaction dUMP + (6R)-5,10-methylene-5,6,7,8-tetrahydrofolate = 7,8-dihydrofolate + dTMP. The protein operates within pyrimidine metabolism; dTTP biosynthesis. In terms of biological role, catalyzes the reductive methylation of 2'-deoxyuridine-5'-monophosphate (dUMP) to 2'-deoxythymidine-5'-monophosphate (dTMP) while utilizing 5,10-methylenetetrahydrofolate (mTHF) as the methyl donor and reductant in the reaction, yielding dihydrofolate (DHF) as a by-product. This enzymatic reaction provides an intracellular de novo source of dTMP, an essential precursor for DNA biosynthesis. This Mesorhizobium japonicum (strain LMG 29417 / CECT 9101 / MAFF 303099) (Mesorhizobium loti (strain MAFF 303099)) protein is Thymidylate synthase.